The sequence spans 296 residues: Co-chaperone protein DjlA (296 aa).

The Periplasmic portion of the chain corresponds to 1–15; sequence MNLRDFFVITTWWGK. Residues 16 to 39 form a helical membrane-spanning segment; sequence ILGAFFGYLTAGPVGALFGILVGN. Residues 40-296 are Cytoplasmic-facing; the sequence is FFDRGLVSYY…YELICETKGW (257 aa). Residues 200-225 are disordered; the sequence is QHYHNQQEYKHTSSSQGQQGYKPQSP. Positions 211–221 are enriched in polar residues; the sequence is TSSSQGQQGYK. Positions 231–296 constitute a J domain; it reads HAFALLEVSP…YELICETKGW (66 aa).

As to quaternary structure, homodimer.

It localises to the cell inner membrane. Regulatory DnaK co-chaperone. Direct interaction between DnaK and DjlA is needed for the induction of the wcaABCDE operon, involved in the synthesis of a colanic acid polysaccharide capsule, possibly through activation of the RcsB/RcsC phosphotransfer signaling pathway. The colanic acid capsule may help the bacterium survive conditions outside the host. The protein is Co-chaperone protein DjlA of Legionella pneumophila subsp. pneumophila (strain Philadelphia 1 / ATCC 33152 / DSM 7513).